The following is a 128-amino-acid chain: Protein Wnt-8 (128 aa).

Serine 1 is lipidated: O-palmitoleoyl serine. Cystine bridges form between cysteine 71/cysteine 109 and cysteine 87/cysteine 102. Residues asparagine 74 and asparagine 93 are each glycosylated (N-linked (GlcNAc...) asparagine).

Belongs to the Wnt family. Post-translationally, palmitoleoylation is required for efficient binding to frizzled receptors. Depalmitoleoylation leads to Wnt signaling pathway inhibition. Proteolytic processing by tiki1 and tiki2 promotes oxidation and formation of large disulfide-bond oligomers, leading to inactivation of wnt8.

The protein resides in the secreted. It localises to the extracellular space. Its subcellular location is the extracellular matrix. Its function is as follows. Ligand for members of the frizzled family of seven transmembrane receptors. Probable developmental protein. May be a signaling molecule which affects the development of discrete regions of tissues. Is likely to signal over only few cell diameters. The chain is Protein Wnt-8 (wnt8) from Thunnus thynnus (Atlantic bluefin tuna).